The sequence spans 151 residues: MVDAARASKLADRIQRIVAEMLERRIKDPRLGFVTVTDARLTNDLRDATVYYTVFGSDAEKAATAAALESAKGLIRSEVGRRTGLRHTPTITFVIDEVPDNARHIEELLAKAKQADAEVARAAANARPAGDPDPYREPRPADDDDEDDEDE.

The disordered stretch occupies residues 116 to 151; sequence DAEVARAAANARPAGDPDPYREPRPADDDDEDDEDE. The span at 120–129 shows a compositional bias: low complexity; the sequence is ARAAANARPA. The span at 142–151 shows a compositional bias: acidic residues; sequence DDDDEDDEDE.

This sequence belongs to the RbfA family. In terms of assembly, monomer. Binds 30S ribosomal subunits, but not 50S ribosomal subunits or 70S ribosomes.

It is found in the cytoplasm. Functionally, one of several proteins that assist in the late maturation steps of the functional core of the 30S ribosomal subunit. Associates with free 30S ribosomal subunits (but not with 30S subunits that are part of 70S ribosomes or polysomes). Required for efficient processing of 16S rRNA. May interact with the 5'-terminal helix region of 16S rRNA. This Thermobifida fusca (strain YX) protein is Ribosome-binding factor A.